Reading from the N-terminus, the 357-residue chain is UDP-N-acetylglucosamine--N-acetylmuramyl-(pentapeptide) pyrophosphoryl-undecaprenol N-acetylglucosamine transferase (357 aa).

UDP-N-acetyl-alpha-D-glucosamine-binding positions include Thr-13–Gly-15, Asn-125, Arg-161, Ser-189, Ile-243, and Gln-288.

This sequence belongs to the glycosyltransferase 28 family. MurG subfamily.

It localises to the cell inner membrane. The catalysed reaction is di-trans,octa-cis-undecaprenyl diphospho-N-acetyl-alpha-D-muramoyl-L-alanyl-D-glutamyl-meso-2,6-diaminopimeloyl-D-alanyl-D-alanine + UDP-N-acetyl-alpha-D-glucosamine = di-trans,octa-cis-undecaprenyl diphospho-[N-acetyl-alpha-D-glucosaminyl-(1-&gt;4)]-N-acetyl-alpha-D-muramoyl-L-alanyl-D-glutamyl-meso-2,6-diaminopimeloyl-D-alanyl-D-alanine + UDP + H(+). It participates in cell wall biogenesis; peptidoglycan biosynthesis. In terms of biological role, cell wall formation. Catalyzes the transfer of a GlcNAc subunit on undecaprenyl-pyrophosphoryl-MurNAc-pentapeptide (lipid intermediate I) to form undecaprenyl-pyrophosphoryl-MurNAc-(pentapeptide)GlcNAc (lipid intermediate II). The polypeptide is UDP-N-acetylglucosamine--N-acetylmuramyl-(pentapeptide) pyrophosphoryl-undecaprenol N-acetylglucosamine transferase (Polynucleobacter asymbioticus (strain DSM 18221 / CIP 109841 / QLW-P1DMWA-1) (Polynucleobacter necessarius subsp. asymbioticus)).